Here is a 303-residue protein sequence, read N- to C-terminus: Probable 5-dehydro-4-deoxyglucarate dehydratase (303 aa).

It belongs to the DapA family.

The catalysed reaction is 5-dehydro-4-deoxy-D-glucarate + H(+) = 2,5-dioxopentanoate + CO2 + H2O. It participates in carbohydrate acid metabolism; D-glucarate degradation; 2,5-dioxopentanoate from D-glucarate: step 2/2. In Delftia acidovorans (strain DSM 14801 / SPH-1), this protein is Probable 5-dehydro-4-deoxyglucarate dehydratase.